Here is a 490-residue protein sequence, read N- to C-terminus: Cytochrome P450 2C28 (490 aa).

Phosphoserine is present on Ser127. Lys249 and Lys375 each carry N6-acetyllysine. Cys435 is a heme binding site.

This sequence belongs to the cytochrome P450 family. Heme serves as cofactor. In terms of tissue distribution, liver.

It localises to the endoplasmic reticulum membrane. It is found in the microsome membrane. It carries out the reaction an organic molecule + reduced [NADPH--hemoprotein reductase] + O2 = an alcohol + oxidized [NADPH--hemoprotein reductase] + H2O + H(+). Its function is as follows. Catalyzes the N-demethylation of aminopyrine and benzphetamine, but does not catalyze the hydroxylation of tolbutamide, testosterone, and progesterone. In Mesocricetus auratus (Golden hamster), this protein is Cytochrome P450 2C28 (CYP2C28).